Reading from the N-terminus, the 688-residue chain is Methionine--tRNA ligase (688 aa).

The 'HIGH' region motif lies at 13–23; the sequence is PYANGNFHIGH. Zn(2+) is bound by residues Cys-144, Cys-147, Cys-157, and Cys-160. The 'KMSKS' region signature appears at 342–346; sequence KMSKS. Lys-345 contacts ATP. Residues 582-688 enclose the tRNA-binding domain; that stretch reads DFAKVDLRIA…PGAQPGMRIH (107 aa).

Belongs to the class-I aminoacyl-tRNA synthetase family. MetG type 1 subfamily. Homodimer. Zn(2+) is required as a cofactor.

The protein localises to the cytoplasm. The enzyme catalyses tRNA(Met) + L-methionine + ATP = L-methionyl-tRNA(Met) + AMP + diphosphate. Its function is as follows. Is required not only for elongation of protein synthesis but also for the initiation of all mRNA translation through initiator tRNA(fMet) aminoacylation. The sequence is that of Methionine--tRNA ligase from Acidovorax sp. (strain JS42).